The chain runs to 603 residues: Leucine-rich repeat-containing protein 40 (603 aa).

The interval 1-27 is disordered; sequence MAAARRARAGDPRAGFRRAAEEQSPAV. 20 LRR repeats span residues 83 to 104, 106 to 127, 129 to 150, 152 to 173, 175 to 196, 198 to 219, 221 to 242, 244 to 265, 266 to 286, 290 to 311, 313 to 335, 336 to 357, 401 to 422, 427 to 449, 451 to 473, 474 to 495, 497 to 518, 520 to 541, 544 to 565, and 567 to 588; these read DLTK…VRLL, ALTV…LGQL, NLQK…LLQL, HLKG…FGQL, SLEE…FALL, NLVR…ISAM, SLRQ…LASM, SLEQ…PSCK, LLKE…ENLK, SLSV…ITLL, KLER…GNLS, QLKF…LLQK, TLKL…VFSA, PVTS…VELK, SVCD…CTLH, KLTH…MEAL, RLQV…LYRM, ALET…QLKK, QLGT…LGNC, and TLRT…ILAK.

The chain is Leucine-rich repeat-containing protein 40 (LRRC40) from Gallus gallus (Chicken).